Reading from the N-terminus, the 157-residue chain is Thioredoxin 2 (157 aa).

The signal sequence occupies residues 1–22 (MKHILALVVFIISFFCFKDVNC). One can recognise a Thioredoxin domain in the interval 46–157 (LRMYNKMPRL…ELTSTIRKHL (112 aa)). Active-site nucleophile residues include C82 and C85. Residues C82 and C85 are joined by a disulfide bond.

This sequence belongs to the thioredoxin family. Monomer. Component of the translocon PTEX complex composed of HSP101, EXP2, PTEX150, PTEX88 and TRX2. In terms of processing, the disulfide bond between Cys-82 and Cys-85 acts as a redox-active center and is reduced by thioredoxin reductase TRXR.

Its function is as follows. Participates in various redox reactions through the reversible oxidation of its active center dithiol to a disulfide and catalyzes dithiol-disulfide exchange reactions. As part of the translocon PTEX complex, plays a role in the export of parasite proteins into the host erythrocyte. The translocon PTEX complex is a multi-protein machinery resident in the parasite parasitophorous vacuolar membrane, responsible for protein secretion into host cells. May contribute to the unfolding of proteins containing the PEXEL localization motif before their passage through the translocon or regulate the PTEX complex function. This is Thioredoxin 2 from Plasmodium berghei (strain Anka).